A 381-amino-acid polypeptide reads, in one-letter code: Gas vesicle protein C (381 aa).

7 repeat units span residues 22–59 (QAFAAYADEFAADVDDKRDVSELVDGIDTLRTEMNSTN), 60–84 (DAFRAYSEEFAADVEHFHTSVADRR), 85–122 (DAFDAYADIFATDVAEMQDVSDLLAAIDDLRAEMDETH), 123–160 (EAFDAYADAFVTDVATLRDVSDLLTAISELQSEFVSVQ), 161–192 (GEFNGYASEFGADIDQFHAVVAEKRDGHKDVA), 193–232 (DAFLQYREEFHGVEVQSLLDNIAAFQREMGDYRKAFETTE), and 233–274 (EAFA…IPPI). The 7 X approximate tandem repeats stretch occupies residues 22–274 (QAFAAYADEF…TETEVDIPPI (253 aa)). A disordered region spans residues 261 to 333 (AVTGTETEVD…EDDQFLDDET (73 aa)). Residues 276-318 (DSVEPDGEDEDSKADDVEAEAEVETVEMEFGAEMDTEADEDVQ) show a composition bias toward acidic residues.

The protein belongs to the halobacterial gas vesicle GvpC family. In terms of processing, detected as 2 slightly different sizes in vivo; the proteins appears larger in SDS-PAGE probably due to the acidic tail.

The protein localises to the gas vesicle. Functionally, confers stability, involved in shaping gas vesicles (GV), hollow, gas filled proteinaceous nanostructures found in some microorganisms. They allow positioning of halobacteria at the optimal depth for growth in the poorly aerated, shallow brine pools of their habitat. Its function is as follows. Expression of a 9.5 kb mc-vac DNA fragment containing 2 divergently transcribed regions (gvpD-gvpE-gvpF-gvpG-gvpH-gvpI-gvpJ-gvpK-gvpL-gvpM and gvpA-gvpC-gvpN-gvpO) allows H.volcanii to produce gas vesicles. In Haloferax mediterranei (strain ATCC 33500 / DSM 1411 / JCM 8866 / NBRC 14739 / NCIMB 2177 / R-4) (Halobacterium mediterranei), this protein is Gas vesicle protein C.